An 89-amino-acid polypeptide reads, in one-letter code: U-scoloptoxin(11)-Sm4a (89 aa).

Residues 1–17 form the signal peptide; it reads MFFKLVLVSAVAIQALS.

The protein belongs to the scoloptoxin-11 family. Post-translationally, contains 3 disulfide bonds. In terms of tissue distribution, expressed by the venom gland.

The protein resides in the secreted. The sequence is that of U-scoloptoxin(11)-Sm4a from Scolopendra morsitans (Tanzanian blue ringleg centipede).